The following is a 195-amino-acid chain: Interferon tau (195 aa).

A signal peptide spans M1–G23. Disulfide bonds link C24-C122 and C52-C162.

It belongs to the alpha/beta interferon family. IFN-alphaII subfamily. As to expression, constitutively and exclusively expressed in the mononuclear cells of the extraembryonic trophectoderm.

It localises to the secreted. Its function is as follows. Paracrine hormone primarily responsible for maternal recognition of pregnancy. Interacts with endometrial receptors, probably type I interferon receptors, and blocks estrogen receptor expression, preventing the estrogen-induced increase in oxytocin receptor expression in the endometrium. This results in the suppression of the pulsatile endometrial release of the luteolytic hormone prostaglandin F2-alpha, hindering the regression of the corpus luteum (luteolysis) and therefore a return to ovarian cyclicity. This, and a possible direct effect of IFN-tau on prostaglandin synthesis, leads in turn to continued ovarian progesterone secretion, which stimulates the secretion by the endometrium of the nutrients required for the growth of the conceptus. In summary, displays particularly high antiviral and antiproliferative potency concurrently with particular weak cytotoxicity, high antiluteolytic activity and immunomodulatory properties. In contrast with other IFNs, IFN-tau is not virally inducible. The sequence is that of Interferon tau (IFNT) from Cervus elaphus (Red deer).